Consider the following 447-residue polypeptide: Glutamate--tRNA ligase 1 (447 aa).

Residues 10 to 20 (PSPTGMLHVGN) carry the 'HIGH' region motif. The 'KMSKS' region signature appears at 240 to 244 (KISKR). Position 243 (Lys243) interacts with ATP.

Belongs to the class-I aminoacyl-tRNA synthetase family. Glutamate--tRNA ligase type 1 subfamily. In terms of assembly, monomer.

The protein resides in the cytoplasm. The catalysed reaction is tRNA(Glu) + L-glutamate + ATP = L-glutamyl-tRNA(Glu) + AMP + diphosphate. Its function is as follows. Catalyzes the attachment of glutamate to tRNA(Glu) in a two-step reaction: glutamate is first activated by ATP to form Glu-AMP and then transferred to the acceptor end of tRNA(Glu). The chain is Glutamate--tRNA ligase 1 from Rickettsia prowazekii (strain Madrid E).